The primary structure comprises 173 residues: Myeloid-derived growth factor (173 aa).

A signal peptide spans 1–31; it reads MAAPSGGWNGVGASLWAALLLGAVALRPAEA.

Belongs to the MYDGF family. Expressed in eosinophils (at protein level). Expressed in bone marrow cells. Expressed in synovial tissue. Found in synovial fluid of patients with arthropaties.

The protein resides in the secreted. It localises to the endoplasmic reticulum-Golgi intermediate compartment. Its subcellular location is the endoplasmic reticulum. The protein localises to the golgi apparatus. Its function is as follows. Bone marrow-derived monocyte and paracrine-acting protein that promotes cardiac myocyte survival and adaptive angiogenesis for cardiac protection and/or repair after myocardial infarction (MI). Stimulates endothelial cell proliferation through a MAPK1/3-, STAT3- and CCND1-mediated signaling pathway. Inhibits cardiac myocyte apoptosis in a PI3K/AKT-dependent signaling pathway. Involved in endothelial cell proliferation and angiogenesis. The chain is Myeloid-derived growth factor from Homo sapiens (Human).